An 83-amino-acid chain; its full sequence is Large ribosomal subunit protein uL23 (83 aa).

Belongs to the universal ribosomal protein uL23 family. Part of the 50S ribosomal subunit. Contacts protein L29.

In terms of biological role, binds to 23S rRNA. One of the proteins that surrounds the polypeptide exit tunnel on the outside of the ribosome. This Archaeoglobus fulgidus (strain ATCC 49558 / DSM 4304 / JCM 9628 / NBRC 100126 / VC-16) protein is Large ribosomal subunit protein uL23.